A 200-amino-acid chain; its full sequence is Peptidyl-tRNA hydrolase (200 aa).

Position 15 (Y15) interacts with tRNA. H20 acts as the Proton acceptor in catalysis. The tRNA site is built by Y66, N68, and N114.

This sequence belongs to the PTH family. As to quaternary structure, monomer.

It is found in the cytoplasm. It carries out the reaction an N-acyl-L-alpha-aminoacyl-tRNA + H2O = an N-acyl-L-amino acid + a tRNA + H(+). Hydrolyzes ribosome-free peptidyl-tRNAs (with 1 or more amino acids incorporated), which drop off the ribosome during protein synthesis, or as a result of ribosome stalling. Functionally, catalyzes the release of premature peptidyl moieties from peptidyl-tRNA molecules trapped in stalled 50S ribosomal subunits, and thus maintains levels of free tRNAs and 50S ribosomes. This is Peptidyl-tRNA hydrolase from Paraburkholderia xenovorans (strain LB400).